The following is a 380-amino-acid chain: Protein FAM110B (380 aa).

The interval 92–272 (ALGSPTLKGF…RPSLQRSKSD (181 aa)) is disordered. Gly residues predominate over residues 100–110 (GFGGGGGGAKS). Polar residues predominate over residues 127-138 (ILNSSEGSSTGS). Basic and acidic residues predominate over residues 153–162 (DAAELHRHSF). Over residues 239-248 (KVAAPAAVKS) the composition is skewed to low complexity. Residues Ser-248 and Ser-311 each carry the phosphoserine modification. The interval 327 to 347 (DCEQSQDSNSDLRNDDSANDR) is disordered. The segment covering 336-345 (SDLRNDDSAN) has biased composition (basic and acidic residues).

It belongs to the FAM110 family.

It localises to the cytoplasm. The protein localises to the cytoskeleton. It is found in the microtubule organizing center. Its subcellular location is the centrosome. This is Protein FAM110B (FAM110B) from Bos taurus (Bovine).